Here is a 719-residue protein sequence, read N- to C-terminus: ATP-dependent RNA helicase SUV3 homolog, mitochondrial (719 aa).

The N-terminal 18 residues, 1-18 (MRRASGVLRVLGGLTQRC), are a transit peptide targeting the mitochondrion. The interval 16–42 (QRCSTSSTPSSSRFPAMNSRRKRNSVR) is disordered. The Helicase ATP-binding domain occupies 181-319 (EARSVTRKIF…PAAIDIVKKL (139 aa)). 194 to 201 (GPTNSGKT) is a binding site for ATP. The Helicase C-terminal domain occupies 343-499 (KAIESYSNIE…PTYDQIETFS (157 aa)). The segment at 662-692 (SKAAGSSKSSEGKRENPSKSEREKPNKRSSI) is disordered. The segment covering 671–687 (SEGKRENPSKSEREKPN) has biased composition (basic and acidic residues). Residues 693 to 717 (LEALLKRADISEDDLEQLREELNKN) adopt a coiled-coil conformation.

Belongs to the helicase family. Mg(2+) serves as cofactor. Requires Mn(2+) as cofactor.

The protein resides in the mitochondrion matrix. It localises to the nucleus. The catalysed reaction is ATP + H2O = ADP + phosphate + H(+). In terms of biological role, ATPase and DNA/RNA helicase able to unwind DNA/DNA, DNA/RNA and RNA/RNA duplexes in the 5'-3' direction. This Caenorhabditis elegans protein is ATP-dependent RNA helicase SUV3 homolog, mitochondrial.